Reading from the N-terminus, the 410-residue chain is 3-phenylpropionate/cinnamic acid dioxygenase ferredoxin--NAD(+) reductase component (410 aa).

An FAD-binding site is contributed by 5-36 (TIIIVGGGQAAAMAAASLRQQGFTGELHLFSD). An NAD(+)-binding site is contributed by 146–184 (SVVIVGAGTIGLELAASATQRSAAQRSAAQRRCKVTVIE).

The protein belongs to the bacterial ring-hydroxylating dioxygenase ferredoxin reductase family. As to quaternary structure, this dioxygenase system consists of four proteins: the two subunits of the hydroxylase component (HcaE and HcaF), a ferredoxin (HcaC) and a ferredoxin reductase (HcaD). It depends on FAD as a cofactor.

It catalyses the reaction 2 reduced [2Fe-2S]-[ferredoxin] + NAD(+) + H(+) = 2 oxidized [2Fe-2S]-[ferredoxin] + NADH. It functions in the pathway aromatic compound metabolism; 3-phenylpropanoate degradation. Its function is as follows. Part of the multicomponent 3-phenylpropionate dioxygenase, that converts 3-phenylpropionic acid (PP) and cinnamic acid (CI) into 3-phenylpropionate-dihydrodiol (PP-dihydrodiol) and cinnamic acid-dihydrodiol (CI-dihydrodiol), respectively. This Shigella flexneri serotype 5b (strain 8401) protein is 3-phenylpropionate/cinnamic acid dioxygenase ferredoxin--NAD(+) reductase component.